We begin with the raw amino-acid sequence, 219 residues long: 7-cyano-7-deazaguanine synthase (219 aa).

10–20 lines the ATP pocket; it reads FSGGQDSTTCL. Residues C188, C196, C199, and C202 each contribute to the Zn(2+) site.

It belongs to the QueC family. Requires Zn(2+) as cofactor.

The enzyme catalyses 7-carboxy-7-deazaguanine + NH4(+) + ATP = 7-cyano-7-deazaguanine + ADP + phosphate + H2O + H(+). The protein operates within purine metabolism; 7-cyano-7-deazaguanine biosynthesis. In terms of biological role, catalyzes the ATP-dependent conversion of 7-carboxy-7-deazaguanine (CDG) to 7-cyano-7-deazaguanine (preQ(0)). This is 7-cyano-7-deazaguanine synthase from Neisseria gonorrhoeae (strain NCCP11945).